A 309-amino-acid polypeptide reads, in one-letter code: Uricase-2 isozyme 2 (309 aa).

Residues Lys18 and Thr64 each act as charge relay system in the active site. Urate-binding residues include Thr64, Asp65, Phe166, Arg183, Val238, Gln239, and Asn265. His267 (charge relay system) is an active-site residue.

Belongs to the uricase family. In terms of assembly, homotetramer.

It localises to the peroxisome. The enzyme catalyses urate + O2 + H2O = 5-hydroxyisourate + H2O2. The protein operates within purine metabolism; urate degradation; (S)-allantoin from urate: step 1/3. In terms of biological role, catalyzes the oxidation of uric acid to 5-hydroxyisourate, which is further processed to form (S)-allantoin. The sequence is that of Uricase-2 isozyme 2 from Glycine max (Soybean).